A 221-amino-acid polypeptide reads, in one-letter code: FMN-dependent NADH:quinone oxidoreductase 1 (221 aa).

FMN is bound by residues 17-19 (SAS) and 148-151 (SSGG).

The protein belongs to the azoreductase type 1 family. In terms of assembly, homodimer. It depends on FMN as a cofactor.

It catalyses the reaction 2 a quinone + NADH + H(+) = 2 a 1,4-benzosemiquinone + NAD(+). The catalysed reaction is N,N-dimethyl-1,4-phenylenediamine + anthranilate + 2 NAD(+) = 2-(4-dimethylaminophenyl)diazenylbenzoate + 2 NADH + 2 H(+). Its function is as follows. Quinone reductase that provides resistance to thiol-specific stress caused by electrophilic quinones. Also exhibits azoreductase activity. Catalyzes the reductive cleavage of the azo bond in aromatic azo compounds to the corresponding amines. The protein is FMN-dependent NADH:quinone oxidoreductase 1 of Clostridium acetobutylicum (strain ATCC 824 / DSM 792 / JCM 1419 / IAM 19013 / LMG 5710 / NBRC 13948 / NRRL B-527 / VKM B-1787 / 2291 / W).